The following is a 524-amino-acid chain: Peptide chain release factor 3 (524 aa).

A tr-type G domain is found at 9–275 (SRRRTFAIIS…AVVDLSPPPI (267 aa)). GTP is bound by residues 18–25 (SHPDAGKT), 86–90 (DTPGH), and 140–143 (NKLD).

It belongs to the TRAFAC class translation factor GTPase superfamily. Classic translation factor GTPase family. PrfC subfamily.

The protein localises to the cytoplasm. Increases the formation of ribosomal termination complexes and stimulates activities of RF-1 and RF-2. It binds guanine nucleotides and has strong preference for UGA stop codons. It may interact directly with the ribosome. The stimulation of RF-1 and RF-2 is significantly reduced by GTP and GDP, but not by GMP. This Dechloromonas aromatica (strain RCB) protein is Peptide chain release factor 3.